Reading from the N-terminus, the 263-residue chain is Troponin T, slow skeletal muscle (263 aa).

Positions 1–38 (MSDAEEQEYEEEQPEEEEAAEEEEEAPEEPEPAAEPEE) are enriched in acidic residues. 2 disordered regions span residues 1-64 (MSDA…RVDF) and 109-154 (AERA…KKKV). Position 2 is a phosphoserine; by CK2 (Ser2). Positions 44-56 (SRPVVPPLIPPKI) are enriched in pro residues. Residues 109-150 (AERAEQQRFRTEKERERQAKLAEEKMRKEEEEAKKRAEDDAK) show a composition bias toward basic and acidic residues.

Belongs to the troponin T family. In terms of assembly, interacts with TPM3. In terms of tissue distribution, expressed dominantly in slow muscles, like masseter, diaphragm, psoas major and spinnalis. Isoform 2 is also expressed in fast muscles.

Troponin T is the tropomyosin-binding subunit of troponin, the thin filament regulatory complex which confers calcium-sensitivity to striated muscle actomyosin ATPase activity. This chain is Troponin T, slow skeletal muscle (TNNT1), found in Bos taurus (Bovine).